Reading from the N-terminus, the 592-residue chain is MRSHYCGSVNESHLDQEVTLCGWVNRRRDHGGVIFIDLRDREGLVQVVFDPDLPEVFATAERVRSEYVLKVKGRVRRRPAGTENPDLPTGAIEVLGRELTVLNSAETPPFQLDEDEVNEETRLRYRYVDLRRPAMQKRLQMRARVSRTLRRFLEDNGFLDIETPMLTKATPEGARDYIVPSRTHPGSFFALPQSPQLFKQLLMMGGMDRYYQIVRCFRDEDLRADRQPEFTQLDIETSFMDEEGIMGLMEEMVRELFAQVLEVPLHTPFQRMSYAEAMARYGSDKPDLRIPLELTELTDIMGEVDFKVFSGPARDPAGRVAALRVPKGGELSRKDIDDYTHFVGRYGAKGLAYIKVNDLNAGREGLQSPILKFMPDTVVVEILGRTGAEDGDLIFFGADKARIVNEALGALRVKLGHDLGLVERGWRPLWVVDFPMFEHDEKEGRWVALHHPFTAPRVERPEELTGNPGEMISRAYDMVLNGTEVGGGSVRIHTTAMQQAVFNLLGIGEAEARDKFGFLLDALKYGCPPHGGIAFGLDRLVMLMTGSQSIRDVMAFPKTQTAHCPLTDAPAEVSDAQLKELSIRVKKQTASG.

E172 is an L-aspartate binding site. The segment at 196-199 is aspartate; that stretch reads QLFK. Residue R218 coordinates L-aspartate. ATP-binding positions include 218 to 220 and Q227; that span reads RDE. Position 450 (H450) interacts with L-aspartate. Residue E484 coordinates ATP. R491 is an L-aspartate binding site. Residue 536–539 coordinates ATP; the sequence is GLDR.

This sequence belongs to the class-II aminoacyl-tRNA synthetase family. Type 1 subfamily. As to quaternary structure, homodimer.

Its subcellular location is the cytoplasm. The catalysed reaction is tRNA(Asx) + L-aspartate + ATP = L-aspartyl-tRNA(Asx) + AMP + diphosphate. Functionally, aspartyl-tRNA synthetase with relaxed tRNA specificity since it is able to aspartylate not only its cognate tRNA(Asp) but also tRNA(Asn). Reaction proceeds in two steps: L-aspartate is first activated by ATP to form Asp-AMP and then transferred to the acceptor end of tRNA(Asp/Asn). This is Aspartate--tRNA(Asp/Asn) ligase from Thioalkalivibrio sulfidiphilus (strain HL-EbGR7).